A 388-amino-acid chain; its full sequence is Chorismate synthase (388 aa).

NADP(+)-binding residues include Arg-39 and Arg-45. Residues 130–132 (RSS), 251–252 (NA), Gly-296, 311–315 (KPIPT), and Arg-337 each bind FMN.

Belongs to the chorismate synthase family. As to quaternary structure, homotetramer. FMNH2 serves as cofactor.

It catalyses the reaction 5-O-(1-carboxyvinyl)-3-phosphoshikimate = chorismate + phosphate. Its pathway is metabolic intermediate biosynthesis; chorismate biosynthesis; chorismate from D-erythrose 4-phosphate and phosphoenolpyruvate: step 7/7. Catalyzes the anti-1,4-elimination of the C-3 phosphate and the C-6 proR hydrogen from 5-enolpyruvylshikimate-3-phosphate (EPSP) to yield chorismate, which is the branch point compound that serves as the starting substrate for the three terminal pathways of aromatic amino acid biosynthesis. This reaction introduces a second double bond into the aromatic ring system. This Streptococcus suis (strain 98HAH33) protein is Chorismate synthase.